The primary structure comprises 334 residues: Uroporphyrinogen decarboxylase (334 aa).

Substrate is bound by residues 22-26 (RQVGR), Asp71, Tyr140, Ser195, and His310.

It belongs to the uroporphyrinogen decarboxylase family. Homodimer.

The protein resides in the cytoplasm. The catalysed reaction is uroporphyrinogen III + 4 H(+) = coproporphyrinogen III + 4 CO2. It participates in porphyrin-containing compound metabolism; protoporphyrin-IX biosynthesis; coproporphyrinogen-III from 5-aminolevulinate: step 4/4. Catalyzes the decarboxylation of four acetate groups of uroporphyrinogen-III to yield coproporphyrinogen-III. The chain is Uroporphyrinogen decarboxylase from Chlamydia muridarum (strain MoPn / Nigg).